A 165-amino-acid chain; its full sequence is MSFFIEKEVECNFNFDYEKVAEAVVSASLEHENFPYEAEVNLTLTDNEGIHAINKEYRQIDRPTDVLSFPMLSYETPGDFSFLSDENEDDFNPDTGEVMLGDIIISVDKVKEQAVEYGHSEKREFAFLITHSMLHLFGYDHMEADEAAVMEEHQRKILDALGITR.

The Zn(2+) site is built by His-131, His-135, and His-141.

It belongs to the endoribonuclease YbeY family. Requires Zn(2+) as cofactor.

It is found in the cytoplasm. In terms of biological role, single strand-specific metallo-endoribonuclease involved in late-stage 70S ribosome quality control and in maturation of the 3' terminus of the 16S rRNA. This chain is Endoribonuclease YbeY, found in Agathobacter rectalis (strain ATCC 33656 / DSM 3377 / JCM 17463 / KCTC 5835 / VPI 0990) (Eubacterium rectale).